The following is a 168-amino-acid chain: Large ribosomal subunit protein uL10 (168 aa).

The protein belongs to the universal ribosomal protein uL10 family. Part of the ribosomal stalk of the 50S ribosomal subunit. The N-terminus interacts with L11 and the large rRNA to form the base of the stalk. The C-terminus forms an elongated spine to which L12 dimers bind in a sequential fashion forming a multimeric L10(L12)X complex.

Forms part of the ribosomal stalk, playing a central role in the interaction of the ribosome with GTP-bound translation factors. This Acinetobacter baylyi (strain ATCC 33305 / BD413 / ADP1) protein is Large ribosomal subunit protein uL10.